Consider the following 1033-residue polypeptide: Collagen alpha-2(I) chain (1033 aa).

The segment at 1–1033 (SGGFDFSFLP…FGYEGDFYRA (1033 aa)) is disordered. Composition is skewed to low complexity over residues 25-71 (LGPG…ARGP), 154-175 (SRGS…SAGP), and 221-242 (PGAN…AGAP). Positions 276 to 285 (GESGGKGEPG) are enriched in gly residues. Low complexity predominate over residues 286 to 296 (SAGPQGPPGSS). Positions 318–327 (GLRGGPGSRG) are enriched in gly residues. Low complexity-rich tracts occupy residues 340–356 (PAGA…RGPS) and 391–410 (LPGI…RGEA). Positions 459 to 468 (GVQGGKGEQG) are enriched in gly residues. Composition is skewed to low complexity over residues 519–528 (PSGAIGSRGP) and 540–550 (EPGVVGAPGTA). The span at 551-560 (GPAGSGGLPG) shows a compositional bias: gly residues. Low complexity-rich tracts occupy residues 583-627 (VGTT…PRGS) and 634-654 (VGPA…QPGA). Positions 655-664 (KGERGTKGPK) are enriched in basic and acidic residues. Over residues 672–682 (PTGPVGSAGPA) the composition is skewed to low complexity. A compositionally biased stretch (gly residues) spans 692–701 (GSRGDGGPPG). Low complexity predominate over residues 703–712 (TGFPGAAGRT). A compositionally biased stretch (gly residues) spans 749-758 (GETGAGGPPG). 2 stretches are compositionally biased toward low complexity: residues 766 to 793 (SGEP…LGLP) and 801 to 811 (LPGVAGAVGEP). Positions 812–834 (GPLGIGPPGARGPSGGVGPGVNG) are enriched in gly residues. Low complexity predominate over residues 873-909 (AAGAPGPHGAVGPAGKHGNRGEPGPVGSAGPVGALGP). Residues 919–930 (RGDKGEAGDKGP) are compositionally biased toward basic and acidic residues. The span at 1003–1015 (SGPPGPPGPPGPP) shows a compositional bias: pro residues.

It belongs to the fibrillar collagen family. In terms of assembly, trimers of one alpha 2(I) and two alpha 1(I) chains. Interacts (via C-terminus) with TMEM131 (via PapD-L domain); the interaction is direct and is involved in assembly and TRAPPIII ER-to-Golgi transport complex-dependent secretion of collagen. Prolines at the third position of the tripeptide repeating unit (G-X-Y) are hydroxylated in some or all of the chains. In terms of tissue distribution, expressed in bone.

The protein localises to the secreted. Its subcellular location is the extracellular space. The protein resides in the extracellular matrix. Type I collagen is a member of group I collagen (fibrillar forming collagen). The polypeptide is Collagen alpha-2(I) chain (Mylodon darwinii (Giant ground sloth)).